A 369-amino-acid polypeptide reads, in one-letter code: Molybdenum import ATP-binding protein ModC (369 aa).

In terms of domain architecture, ABC transporter spans 7–243 (PGQAGIHARF…LDLPMAMTDD (237 aa)). Residue 41 to 48 (GQSGSGKT) coordinates ATP. The 66-residue stretch at 304-369 (EGSILNVLAV…AQIKAVSLLA (66 aa)) folds into the Mop domain.

It belongs to the ABC transporter superfamily. Molybdate importer (TC 3.A.1.8) family. The complex is composed of two ATP-binding proteins (ModC), two transmembrane proteins (ModB) and a solute-binding protein (ModA).

It localises to the cell inner membrane. The catalysed reaction is molybdate(out) + ATP + H2O = molybdate(in) + ADP + phosphate + H(+). Part of the ABC transporter complex ModABC involved in molybdenum import. Responsible for energy coupling to the transport system. This Bordetella pertussis (strain Tohama I / ATCC BAA-589 / NCTC 13251) protein is Molybdenum import ATP-binding protein ModC.